The chain runs to 267 residues: L-aspartate dehydrogenase (267 aa).

NAD(+) is bound by residues Ala-124 and Asn-190. Residue His-218 is part of the active site.

The protein belongs to the L-aspartate dehydrogenase family.

The enzyme catalyses L-aspartate + NADP(+) + H2O = oxaloacetate + NH4(+) + NADPH + H(+). The catalysed reaction is L-aspartate + NAD(+) + H2O = oxaloacetate + NH4(+) + NADH + H(+). It participates in cofactor biosynthesis; NAD(+) biosynthesis; iminoaspartate from L-aspartate (dehydrogenase route): step 1/1. In terms of biological role, specifically catalyzes the NAD or NADP-dependent dehydrogenation of L-aspartate to iminoaspartate. This chain is L-aspartate dehydrogenase, found in Methanococcus maripaludis (strain C5 / ATCC BAA-1333).